We begin with the raw amino-acid sequence, 647 residues long: Transcriptional repressor XBP1 (647 aa).

2 stretches are compositionally biased toward polar residues: residues 138-148 (SNKTPVSASPT) and 156-170 (STAS…LTKN). Disordered stretches follow at residues 138–170 (SNKT…LTKN) and 264–295 (LLSS…STSS). Over residues 264–282 (LLSSSTSSPPKRRTSTGST) the composition is skewed to low complexity. The HTH APSES-type domain maps to 282–395 (TFLDANASSS…PDFPKDCESW (114 aa)). A DNA-binding region (H-T-H motif) is located at residues 318 to 339 (CQSYKDFLINELGPDQIDLPNL). Residues 425–434 (TNFTSTAVAR) are compositionally biased toward low complexity. Disordered regions lie at residues 425–455 (TNFT…HSKA), 485–508 (KKNS…GPRD), and 612–647 (QNQR…NSKQ). Residues 435–445 (PRQKPRPRPRQ) are compositionally biased toward basic residues. The segment covering 493-502 (SSTYTSQTSS) has biased composition (low complexity).

It localises to the nucleus. Functionally, transcriptional repressor which binds to the consensus sequence 5'-GCCTCGA[G/A]G[C/A]-3'. Represses CLN1 transcription. This Saccharomyces cerevisiae (strain ATCC 204508 / S288c) (Baker's yeast) protein is Transcriptional repressor XBP1 (XBP1).